We begin with the raw amino-acid sequence, 93 residues long: Small ribosomal subunit protein uS19 (93 aa).

Belongs to the universal ribosomal protein uS19 family.

Functionally, protein S19 forms a complex with S13 that binds strongly to the 16S ribosomal RNA. This chain is Small ribosomal subunit protein uS19, found in Synechococcus sp. (strain JA-2-3B'a(2-13)) (Cyanobacteria bacterium Yellowstone B-Prime).